Reading from the N-terminus, the 411-residue chain is Corticotropin-releasing factor receptor 2 (411 aa).

The segment at residues 1–19 is a signal peptide (not cleaved); the sequence is MDAALLLSLLEANCSLALA. At 1–108 the chain is on the extracellular side; it reads MDAALLLSLL…EPILDDKQRK (108 aa). Asn13, Asn41, Asn74, Asn86, and Asn94 each carry an N-linked (GlcNAc...) asparagine glycan. 3 disulfide bridges follow: Cys14–Cys50, Cys40–Cys83, and Cys64–Cys98. Residues 109-139 form a helical membrane-spanning segment; sequence YDLHYRIALIINYLGHCVSVVALVAAFLLFL. Residues 140-146 are Cytoplasmic-facing; sequence VLRSIRC. A helical membrane pass occupies residues 147–171; sequence LRNVIHWNLITTFILRNITWFLLQL. At 172-185 the chain is on the extracellular side; sequence IDHEVHEGNEVWCR. Cys184 and Cys254 form a disulfide bridge. A helical transmembrane segment spans residues 186 to 214; sequence CVTTIFNYFVVTNFFWMFVEGCYLHTAIV. Topologically, residues 215–221 are cytoplasmic; the sequence is MTYSTEH. A helical transmembrane segment spans residues 222-249; it reads LRKWLFLFIGWCIPCPIIVAWAVGKLYY. Over 250-265 the chain is Extracellular; it reads ENEQCWFGKEPGDLVD. Residues 266–291 form a helical membrane-spanning segment; it reads YIYQGPIILVLLINFVFLFNIVRILM. The Cytoplasmic portion of the chain corresponds to 292-302; that stretch reads TKLRASTTSET. A helical transmembrane segment spans residues 303-327; that stretch reads IQYRKAVKATLVLLPLLGITYMLFF. At 328–334 the chain is on the extracellular side; sequence VNPGEDD. The helical transmembrane segment at 335–364 threads the bilayer; sequence LSQIVFIYFNSFLQSFQGFFVSVFYCFFNG. The Cytoplasmic portion of the chain corresponds to 365–411; sequence EVRSALRKRWHRWQDHHALRVPVARAMSIPTSPTRISFHSIKQTAAV.

It belongs to the G-protein coupled receptor 2 family. Monomer. Interacts (via N-terminal extracellular domain) with CRF, UCN, UCN2 and UCN3. In terms of processing, a N-glycosylation site within the signal peptide impedes its proper cleavage and function. As to expression, predominantly expressed in limbic regions of the brain such as the lateral septum, the entorhinal cortex, the hypothalamic ventromedial nucleus and several amygdaloid nuclei. Also detectable in lung, kidney and heart.

It localises to the cell membrane. In terms of biological role, G-protein coupled receptor for CRH (corticotropin-releasing factor), UCN (urocortin), UCN2 and UCN3. Has high affinity for UCN. Ligand binding causes a conformation change that triggers signaling via guanine nucleotide-binding proteins (G proteins) and down-stream effectors, such as adenylate cyclase. Promotes the activation of adenylate cyclase, leading to increased intracellular cAMP levels. This is Corticotropin-releasing factor receptor 2 (Crhr2) from Rattus norvegicus (Rat).